Reading from the N-terminus, the 221-residue chain is Interleukin-12 subunit alpha (221 aa).

A signal peptide spans 1 to 25; that stretch reads MCPLRSLLLLSTLVLLHHLPHLSLG. 3 disulfide bridges follow: Cys39/Cys112, Cys66/Cys198, and Cys87/Cys125. 2 N-linked (GlcNAc...) asparagine glycosylation sites follow: Asn41 and Asn95.

The protein belongs to the IL-6 superfamily. Heterodimer with IL12B; disulfide-linked. This heterodimer is known as interleukin IL-12. Heterodimer with EBI3/IL27B; not disulfide-linked. This heterodimer is known as interleukin IL-35. Interacts with NBR1; this interaction promotes IL-12 secretion.

The protein localises to the secreted. Heterodimerizes with IL12B to form the IL-12 cytokine or with EBI3/IL27B to form the IL-35 cytokine. IL-12 is primarily produced by professional antigen-presenting cells (APCs) such as B-cells and dendritic cells (DCs) as well as macrophages and granulocytes and regulates T-cell and natural killer-cell responses, induces the production of interferon-gamma (IFN-gamma), favors the differentiation of T-helper 1 (Th1) cells and is an important link between innate resistance and adaptive immunity. Mechanistically, exerts its biological effects through a receptor composed of IL12R1 and IL12R2 subunits. Binding to the receptor results in the rapid tyrosine phosphorylation of a number of cellular substrates including the JAK family kinases TYK2 and JAK2. In turn, recruited STAT4 gets phosphorylated and translocates to the nucleus where it regulates cytokine/growth factor responsive genes. As part of IL-35, plays essential roles in maintaining the immune homeostasis of the liver microenvironment and also functions as an immune-suppressive cytokine. Mediates biological events through unconventional receptors composed of IL12RB2 and gp130/IL6ST heterodimers or homodimers. Signaling requires the transcription factors STAT1 and STAT4, which form a unique heterodimer that binds to distinct DNA sites. The sequence is that of Interleukin-12 subunit alpha (IL12A) from Cervus elaphus (Red deer).